The chain runs to 289 residues: ATP synthase gamma chain (289 aa).

The protein belongs to the ATPase gamma chain family. As to quaternary structure, F-type ATPases have 2 components, CF(1) - the catalytic core - and CF(0) - the membrane proton channel. CF(1) has five subunits: alpha(3), beta(3), gamma(1), delta(1), epsilon(1). CF(0) has three main subunits: a, b and c.

It is found in the cell inner membrane. Its function is as follows. Produces ATP from ADP in the presence of a proton gradient across the membrane. The gamma chain is believed to be important in regulating ATPase activity and the flow of protons through the CF(0) complex. The sequence is that of ATP synthase gamma chain from Histophilus somni (strain 129Pt) (Haemophilus somnus).